Here is a 552-residue protein sequence, read N- to C-terminus: HTH-type transcriptional regulator SgrR (552 aa).

In terms of domain architecture, HTH marR-type spans 1–116 (MPSGRLQQQF…LISHLGRSFR (116 aa)). A DNA-binding region (H-T-H motif) is located at residues 26-49 (LNELADLLNCSRRHMRTLLNTMQA). The solute-binding stretch occupies residues 163 to 493 (ELEADIAHHW…RDWQGDAAQW (331 aa)).

In terms of biological role, activates the small RNA gene sgrS under glucose-phosphate stress conditions as well as yfdZ. Represses its own transcription under both stress and non-stress conditions. Might act as a sensor of the intracellular accumulation of phosphoglucose by binding these molecules in its C-terminal solute-binding domain. The chain is HTH-type transcriptional regulator SgrR from Salmonella typhimurium (strain LT2 / SGSC1412 / ATCC 700720).